A 184-amino-acid chain; its full sequence is ATP synthase subunit b, chloroplastic (184 aa).

Residues 27 to 49 (LATNPINLSVVLGVLIFFGKGVL) form a helical membrane-spanning segment.

The protein belongs to the ATPase B chain family. F-type ATPases have 2 components, F(1) - the catalytic core - and F(0) - the membrane proton channel. F(1) has five subunits: alpha(3), beta(3), gamma(1), delta(1), epsilon(1). F(0) has four main subunits: a(1), b(1), b'(1) and c(10-14). The alpha and beta chains form an alternating ring which encloses part of the gamma chain. F(1) is attached to F(0) by a central stalk formed by the gamma and epsilon chains, while a peripheral stalk is formed by the delta, b and b' chains.

The protein resides in the plastid. Its subcellular location is the chloroplast thylakoid membrane. In terms of biological role, f(1)F(0) ATP synthase produces ATP from ADP in the presence of a proton or sodium gradient. F-type ATPases consist of two structural domains, F(1) containing the extramembraneous catalytic core and F(0) containing the membrane proton channel, linked together by a central stalk and a peripheral stalk. During catalysis, ATP synthesis in the catalytic domain of F(1) is coupled via a rotary mechanism of the central stalk subunits to proton translocation. Component of the F(0) channel, it forms part of the peripheral stalk, linking F(1) to F(0). The protein is ATP synthase subunit b, chloroplastic of Solanum bulbocastanum (Wild potato).